The sequence spans 319 residues: Acetyl esterase (319 aa).

Residues 91 to 93 (HGG) carry the Involved in the stabilization of the negatively charged intermediate by the formation of the oxyanion hole motif. Active-site residues include serine 165, aspartate 262, and histidine 292.

This sequence belongs to the 'GDXG' lipolytic enzyme family. Homodimer. Interacts with MalT and MelA.

The protein localises to the cytoplasm. In terms of biological role, displays esterase activity towards short chain fatty esters (acyl chain length of up to 8 carbons). Able to hydrolyze triacetylglycerol (triacetin) and tributyrylglycerol (tributyrin), but not trioleylglycerol (triolein) or cholesterol oleate. Negatively regulates MalT activity by antagonizing maltotriose binding. Inhibits MelA galactosidase activity. The sequence is that of Acetyl esterase from Escherichia coli O127:H6 (strain E2348/69 / EPEC).